The sequence spans 150 residues: Macrodomain Ter protein (150 aa).

It belongs to the MatP family. As to quaternary structure, homodimer.

It localises to the cytoplasm. In terms of biological role, required for spatial organization of the terminus region of the chromosome (Ter macrodomain) during the cell cycle. Prevents early segregation of duplicated Ter macrodomains during cell division. Binds specifically to matS, which is a 13 bp signature motif repeated within the Ter macrodomain. The chain is Macrodomain Ter protein from Salmonella arizonae (strain ATCC BAA-731 / CDC346-86 / RSK2980).